Consider the following 257-residue polypeptide: Imidazole glycerol phosphate synthase subunit HisF (257 aa).

Active-site residues include aspartate 11 and aspartate 130.

It belongs to the HisA/HisF family. In terms of assembly, heterodimer of HisH and HisF.

The protein resides in the cytoplasm. It catalyses the reaction 5-[(5-phospho-1-deoxy-D-ribulos-1-ylimino)methylamino]-1-(5-phospho-beta-D-ribosyl)imidazole-4-carboxamide + L-glutamine = D-erythro-1-(imidazol-4-yl)glycerol 3-phosphate + 5-amino-1-(5-phospho-beta-D-ribosyl)imidazole-4-carboxamide + L-glutamate + H(+). It functions in the pathway amino-acid biosynthesis; L-histidine biosynthesis; L-histidine from 5-phospho-alpha-D-ribose 1-diphosphate: step 5/9. In terms of biological role, IGPS catalyzes the conversion of PRFAR and glutamine to IGP, AICAR and glutamate. The HisF subunit catalyzes the cyclization activity that produces IGP and AICAR from PRFAR using the ammonia provided by the HisH subunit. The sequence is that of Imidazole glycerol phosphate synthase subunit HisF from Shewanella putrefaciens (strain CN-32 / ATCC BAA-453).